A 207-amino-acid chain; its full sequence is NADH-quinone oxidoreductase subunit C (207 aa).

This sequence belongs to the complex I 30 kDa subunit family. In terms of assembly, NDH-1 is composed of 14 different subunits. Subunits NuoB, C, D, E, F, and G constitute the peripheral sector of the complex.

Its subcellular location is the cell inner membrane. It carries out the reaction a quinone + NADH + 5 H(+)(in) = a quinol + NAD(+) + 4 H(+)(out). Its function is as follows. NDH-1 shuttles electrons from NADH, via FMN and iron-sulfur (Fe-S) centers, to quinones in the respiratory chain. The immediate electron acceptor for the enzyme in this species is believed to be ubiquinone. Couples the redox reaction to proton translocation (for every two electrons transferred, four hydrogen ions are translocated across the cytoplasmic membrane), and thus conserves the redox energy in a proton gradient. In Rickettsia felis (strain ATCC VR-1525 / URRWXCal2) (Rickettsia azadi), this protein is NADH-quinone oxidoreductase subunit C.